The chain runs to 607 residues: UvrABC system protein C (607 aa).

In terms of domain architecture, GIY-YIG spans 15–94; sequence ENPGVYLMKN…IKRHRPYFNV (80 aa). The UVR domain occupies 204–239; that stretch reads DQVLKLLIRLMNEASARLDYETAALRRDQIASIKEV.

The protein belongs to the UvrC family. As to quaternary structure, interacts with UvrB in an incision complex.

It is found in the cytoplasm. In terms of biological role, the UvrABC repair system catalyzes the recognition and processing of DNA lesions. UvrC both incises the 5' and 3' sides of the lesion. The N-terminal half is responsible for the 3' incision and the C-terminal half is responsible for the 5' incision. In Dehalococcoides mccartyi (strain CBDB1), this protein is UvrABC system protein C.